We begin with the raw amino-acid sequence, 446 residues long: tRNA modification GTPase MnmE (446 aa).

(6S)-5-formyl-5,6,7,8-tetrahydrofolate is bound by residues Arg24, Glu81, and Lys120. A TrmE-type G domain is found at 216–368 (GLHAVLIGPP…LHTRLRELAL (153 aa)). Asn226 is a binding site for K(+). GTP-binding positions include 226–231 (NAGKSS), 245–251 (TDVAGTT), and 270–273 (DTAG). Ser230 lines the Mg(2+) pocket. Residues Thr245, Val247, and Thr250 each coordinate K(+). Thr251 provides a ligand contact to Mg(2+). (6S)-5-formyl-5,6,7,8-tetrahydrofolate is bound at residue Lys446.

Belongs to the TRAFAC class TrmE-Era-EngA-EngB-Septin-like GTPase superfamily. TrmE GTPase family. In terms of assembly, homodimer. Heterotetramer of two MnmE and two MnmG subunits. It depends on K(+) as a cofactor.

It is found in the cytoplasm. Its function is as follows. Exhibits a very high intrinsic GTPase hydrolysis rate. Involved in the addition of a carboxymethylaminomethyl (cmnm) group at the wobble position (U34) of certain tRNAs, forming tRNA-cmnm(5)s(2)U34. In Xanthomonas campestris pv. campestris (strain 8004), this protein is tRNA modification GTPase MnmE.